The following is a 428-amino-acid chain: Flotillin-2 (428 aa).

S-palmitoyl cysteine attachment occurs at residues Cys-4, Cys-19, and Cys-20.

This sequence belongs to the band 7/mec-2 family. Flotillin subfamily. As to quaternary structure, heterooligomeric complex of flotillins 1 and 2. Post-translationally, palmitoylation may be required for the formation of higher order complexes and for neurite outgrowth in cultured neural stem cells. As to expression, normally expressed in growing retinal exons of newly differentiated ganglion cells at the retinal margin. After optic nerve injury, expressed in all retinal ganglion cells and retinal axons. Also expressed in endothelial cells, spinal cord, larval and adult skin, muscle processes, thymus and gill macrophages.

It is found in the membrane. It localises to the endosome. May play a role in axon growth and regeneration. May be involved in epidermal cell adhesion and epidermal structure and function. The polypeptide is Flotillin-2 (flot2) (Carassius auratus (Goldfish)).